The chain runs to 496 residues: tRNA-2-methylthio-N(6)-dimethylallyladenosine synthase (496 aa).

The MTTase N-terminal domain occupies 10 to 126; the sequence is RTYEVRTYGC…LPALLERARV (117 aa). [4Fe-4S] cluster-binding residues include Cys19, Cys55, Cys89, Cys163, Cys167, and Cys170. Residues 149-380 enclose the Radical SAM core domain; it reads RESAYAAWVS…ALVNEIAWEE (232 aa). In terms of domain architecture, TRAM spans 382–451; sequence KRLVGRRVEL…PHHLVADGPV (70 aa). A disordered region spans residues 465 to 496; it reads ARNAAPAPSSGVTLGMPTVGAPAPLPDAPACR. The segment covering 487 to 496 has biased composition (pro residues); that stretch reads APLPDAPACR.

Belongs to the methylthiotransferase family. MiaB subfamily. In terms of assembly, monomer. [4Fe-4S] cluster is required as a cofactor.

The protein localises to the cytoplasm. It carries out the reaction N(6)-dimethylallyladenosine(37) in tRNA + (sulfur carrier)-SH + AH2 + 2 S-adenosyl-L-methionine = 2-methylsulfanyl-N(6)-dimethylallyladenosine(37) in tRNA + (sulfur carrier)-H + 5'-deoxyadenosine + L-methionine + A + S-adenosyl-L-homocysteine + 2 H(+). In terms of biological role, catalyzes the methylthiolation of N6-(dimethylallyl)adenosine (i(6)A), leading to the formation of 2-methylthio-N6-(dimethylallyl)adenosine (ms(2)i(6)A) at position 37 in tRNAs that read codons beginning with uridine. This chain is tRNA-2-methylthio-N(6)-dimethylallyladenosine synthase, found in Nocardioides sp. (strain ATCC BAA-499 / JS614).